A 27-amino-acid chain; its full sequence is FMKVIDPGTKWCGPGNKAADDTDNGKN.

A disordered region spans residues 1-27 (FMKVIDPGTKWCGPGNKAADDTDNGKN). Ca(2+) is bound by residues Trp11, Gly13, and Gly15. The span at 18 to 27 (AADDTDNGKN) shows a compositional bias: basic and acidic residues.

The protein belongs to the phospholipase A2 family. Requires Ca(2+) as cofactor. As to expression, expressed by the venom gland.

It localises to the secreted. The catalysed reaction is a 1,2-diacyl-sn-glycero-3-phosphocholine + H2O = a 1-acyl-sn-glycero-3-phosphocholine + a fatty acid + H(+). Its function is as follows. PLA2 catalyzes the calcium-dependent hydrolysis of the 2-acyl groups in 3-sn-phosphoglycerides. This is Phospholipase A2 2 from Opisthacanthus cayaporum (South American scorpion).